We begin with the raw amino-acid sequence, 367 residues long: MEKVKSSYLPYTIRILISFLFIISAIAKMYPSPYFAISTFEVKQLYPLGFSEIIAPWFSRILIGIELALGILILQNNFLRKLIIPITILLLAVFVGHLSYVTFLSGGNTGNCGCFGELIPMTPIQAIIKNIIAIFLLVYLFFLLSKTNDKNNFYVVIGITLATIISLFLLAPIKKNTNDFTISPIENTLIDSTKNEIIAPILKDSVITTVKVDSVKKAIPTKIEEVISTTEPTKHKSGYAKLFPKIDTGRKTLCFFVPGCDHCRKAAKELTELKQKNANFPEILIIFMNEEVDLIPDFFKETGAEYPYKIIEIIPFWNALGTGKDTPGVKYIWNGNTYKYYNGITDNKFNPIDYQALINKPFSELKK.

Transmembrane regions (helical) follow at residues 15–35 (ILIS…SPYF), 53–73 (IIAP…GILI), 83–103 (IIPI…YVTF), 124–144 (IQAI…FFLL), and 153–173 (FYVV…LAPI).

It is found in the membrane. This is Protein TlpB (tlpB) from Flavobacterium psychrophilum.